The primary structure comprises 325 residues: Acetyl-coenzyme A carboxylase carboxyl transferase subunit alpha (325 aa).

In terms of domain architecture, CoA carboxyltransferase C-terminal spans 35 to 292 (EIEKLEARLA…DKVLKRSLKQ (258 aa)).

Belongs to the AccA family. In terms of assembly, acetyl-CoA carboxylase is a heterohexamer composed of biotin carboxyl carrier protein (AccB), biotin carboxylase (AccC) and two subunits each of ACCase subunit alpha (AccA) and ACCase subunit beta (AccD).

Its subcellular location is the cytoplasm. It catalyses the reaction N(6)-carboxybiotinyl-L-lysyl-[protein] + acetyl-CoA = N(6)-biotinyl-L-lysyl-[protein] + malonyl-CoA. It participates in lipid metabolism; malonyl-CoA biosynthesis; malonyl-CoA from acetyl-CoA: step 1/1. Its function is as follows. Component of the acetyl coenzyme A carboxylase (ACC) complex. First, biotin carboxylase catalyzes the carboxylation of biotin on its carrier protein (BCCP) and then the CO(2) group is transferred by the carboxyltransferase to acetyl-CoA to form malonyl-CoA. This Geobacillus sp. (strain WCH70) protein is Acetyl-coenzyme A carboxylase carboxyl transferase subunit alpha.